The sequence spans 189 residues: Interferon alpha-1/13 (189 aa).

The N-terminal stretch at 1-23 (MASPFALLMVLVVLSCKSSCSLG) is a signal peptide. Intrachain disulfides connect C24–C122 and C52–C162.

Belongs to the alpha/beta interferon family. As to quaternary structure, interacts with CR2.

The protein localises to the secreted. Its function is as follows. Produced by macrophages, IFN-alpha have antiviral activities. Interferon stimulates the production of two enzymes: a protein kinase and an oligoadenylate synthetase. The chain is Interferon alpha-1/13 (IFNA1) from Homo sapiens (Human).